Here is a 101-residue protein sequence, read N- to C-terminus: NADH-quinone oxidoreductase subunit K (101 aa).

The next 3 membrane-spanning stretches (helical) occupy residues 5 to 25, 30 to 50, and 61 to 81; these read LTHYVVASGILFAIGLAGIIL, IVILMCLEIMLNAANLALVAF, and VLVFFVITVAAAEVAVGLALI.

Belongs to the complex I subunit 4L family. As to quaternary structure, NDH-1 is composed of 14 different subunits. Subunits NuoA, H, J, K, L, M, N constitute the membrane sector of the complex.

It is found in the cell inner membrane. The enzyme catalyses a quinone + NADH + 5 H(+)(in) = a quinol + NAD(+) + 4 H(+)(out). NDH-1 shuttles electrons from NADH, via FMN and iron-sulfur (Fe-S) centers, to quinones in the respiratory chain. The immediate electron acceptor for the enzyme in this species is believed to be ubiquinone. Couples the redox reaction to proton translocation (for every two electrons transferred, four hydrogen ions are translocated across the cytoplasmic membrane), and thus conserves the redox energy in a proton gradient. The polypeptide is NADH-quinone oxidoreductase subunit K (Methylacidiphilum infernorum (isolate V4) (Methylokorus infernorum (strain V4))).